Here is a 295-residue protein sequence, read N- to C-terminus: GTPase Era (295 aa).

Residues 5-172 enclose the Era-type G domain; sequence YCGYAAIIGR…EQAVHQLMPE (168 aa). Positions 13-20 are G1; sequence GRPNVGKS. 13 to 20 contacts GTP; the sequence is GRPNVGKS. Positions 39–43 are G2; sequence QTTRY. A G3 region spans residues 60–63; the sequence is DTPG. Residues 60-64 and 121-124 each bind GTP; these read DTPGL and NKVD. A G4 region spans residues 121–124; it reads NKVD. Residues 151 to 153 are G5; it reads LSA. In terms of domain architecture, KH type-2 spans 203 to 279; sequence LGQEIPYSLA…FLQLWVKVKS (77 aa).

The protein belongs to the TRAFAC class TrmE-Era-EngA-EngB-Septin-like GTPase superfamily. Era GTPase family. Monomer.

Its subcellular location is the cytoplasm. It is found in the cell inner membrane. In terms of biological role, an essential GTPase that binds both GDP and GTP, with rapid nucleotide exchange. Plays a role in 16S rRNA processing and 30S ribosomal subunit biogenesis and possibly also in cell cycle regulation and energy metabolism. The sequence is that of GTPase Era from Coxiella burnetii (strain CbuK_Q154) (Coxiella burnetii (strain Q154)).